The primary structure comprises 74 residues: Large ribosomal subunit protein bL31 (74 aa).

Zn(2+) is bound by residues Cys-16, Cys-18, Cys-38, and Cys-41.

It belongs to the bacterial ribosomal protein bL31 family. Type A subfamily. In terms of assembly, part of the 50S ribosomal subunit. Zn(2+) is required as a cofactor.

Its function is as follows. Binds the 23S rRNA. The polypeptide is Large ribosomal subunit protein bL31 (rpmE) (Streptomyces coelicolor (strain ATCC BAA-471 / A3(2) / M145)).